The following is a 296-amino-acid chain: L-fucono-1,5-lactonase (296 aa).

The protein belongs to the metallo-dependent hydrolases superfamily. In terms of assembly, monomer. It depends on Does not require a divalent metal for activity. The purified enzyme contains Zn(2+), but the addition of chelators does not diminish the catalytic activity of the enzyme, indicating that it does not require a divalent cation for substrate turnover. as a cofactor.

It carries out the reaction L-fucono-1,5-lactone + H2O = L-fuconate + H(+). The catalysed reaction is L-fucono-1,4-lactone + H2O = L-fuconate + H(+). It catalyses the reaction D-arabinono-1,4-lactone + H2O = D-arabinonate + H(+). The enzyme catalyses L-xylono-1,4-lactone + H2O = L-xylonate + H(+). It carries out the reaction L-galactono-1,4-lactone + H2O = L-galactonate + H(+). It functions in the pathway carbohydrate degradation; L-fucose degradation. In terms of biological role, L-fucono-1,5-lactonase involved in an L-fucose degradation pathway. Catalyzes the hydrolysis of L-fucono-1,5-lactone to L-fuconate. L-fucono-1,5-lactone is the best substrate, but the enzyme can also hydrolyze L-fucono-1,4-lactone, L-galactono-1,4-lactone D-arabinono-1,4-lactone and L-xylono-1,4-lactone. The protein is L-fucono-1,5-lactonase of Burkholderia multivorans (strain ATCC 17616 / 249).